The sequence spans 382 residues: Mannitol-1-phosphate 5-dehydrogenase (382 aa).

Ala3 to Gly14 lines the NAD(+) pocket.

The protein belongs to the mannitol dehydrogenase family.

It carries out the reaction D-mannitol 1-phosphate + NAD(+) = beta-D-fructose 6-phosphate + NADH + H(+). This chain is Mannitol-1-phosphate 5-dehydrogenase, found in Salmonella schwarzengrund (strain CVM19633).